Here is a 409-residue protein sequence, read N- to C-terminus: bZIP transcription factor 16 (409 aa).

Positions 1–16 are enriched in basic and acidic residues; the sequence is MASNEMEKSSKEKEPK. Disordered stretches follow at residues 1-63, 118-236, 274-327, and 362-409; these read MASN…VASS, NGMT…LPVS, MHGK…LRKQ, and TTEN…KDST. The span at 24-34 shows a compositional bias: low complexity; the sequence is APPSSQEPSSA. A compositionally biased stretch (basic and acidic residues) spans 133–145; sequence GDAKQSEVKEKLP. The span at 152–178 shows a compositional bias: polar residues; that stretch reads SLGSLNMITGKNNEPGKNSGASANGAY. Residues 179–203 are compositionally biased toward low complexity; the sequence is SKSGESASDGSSEGSDGNSQNDSGS. The span at 216-228 shows a compositional bias: polar residues; sequence NGGSANGPQNGSA. The bZIP domain maps to 305–368; sequence ELKRQRRKQS…EELTTENTSL (64 aa). The Bipartite nuclear localization signal signature appears at 307–323; sequence KRQRRKQSNRESARRSR. Residues 307–326 are basic motif; it reads KRQRRKQSNRESARRSRLRK. Residues 314 to 327 show a composition bias toward basic and acidic residues; sequence SNRESARRSRLRKQ. Residues 333–368 are leucine-zipper; it reads LAQRAEVLNEENTNLRAEINKLKSQCEELTTENTSL. A compositionally biased stretch (basic and acidic residues) spans 398–409; that stretch reads AERKVDSYKDST.

It belongs to the bZIP family. As to quaternary structure, monomer, homodimer and heterodimers with BZIP68 and GBF1/BZIP41. Heterodimers with GBF2/BZIP54 and GBF3/BZIP55. Binds DNA as monomer and forms homo- and heterodimers. The monomeric form is redox regulated. Interacts with GIP1.

It is found in the nucleus. Functionally, transcriptional activator that binds to the G-box motif (5'-CACGTG-3') and other cis-acting elements with 5'-ACGT-3' core, such as Hex, C-box and as-1 motifs. Possesses high binding affinity to G-box, much lower affinity to Hex and C-box, and little affinity to as-1 element. G-box and G-box-like motifs are cis-acting elements defined in promoters of certain plant genes which are regulated by such diverse stimuli as light-induction or hormone control. Binds to the G-box motif 5'-CACGTG-3' of LHCB2.4 (At3g27690) promoter. May act as transcriptional repressor in light-regulated expression of LHCB2.4. Binds DNA as monomer. DNA-binding activity is redox-dependent. The chain is bZIP transcription factor 16 from Arabidopsis thaliana (Mouse-ear cress).